The chain runs to 1166 residues: Serine-aspartate repeat-containing protein E (1166 aa).

Residues 1–52 (MINRDNKKAITKKGMISNRLNKFSIRKYTVGTASILVGTTLIFGLGNQEAKA) form the signal peptide. Residues 23-34 (FSIRKYTVGTAS) carry the YSIRK-G/S signaling motif motif. The ligand binding A region stretch occupies residues 53-606 (AENTSTENAK…GDGTVKPEEK (554 aa)). Residues 54–253 (ENTSTENAKQ…HSTKPVATAP (200 aa)) form a disordered region. The span at 61-75 (AKQDDATTSDNKEVV) shows a compositional bias: basic and acidic residues. Positions 77-90 (ETENNSTTENNSTN) are enriched in low complexity. Residues 92–108 (IKKETNTDSQPEAKKES) are compositionally biased toward basic and acidic residues. The segment covering 118 to 129 (NNVTATTETKPQ) has biased composition (polar residues). Residues 130-145 (NIEKENVKPSTDKTAT) are compositionally biased toward basic and acidic residues. Residues 166-178 (TTKPSTSEPSTSE) are compositionally biased toward low complexity. A compositionally biased stretch (polar residues) spans 179-212 (IQTKPTTPQESTNIENSQPQPTPSKVDNQVTDAT). The span at 221 to 246 (SKEELKKNPEKLKELVRNDSNTDHST) shows a compositional bias: basic and acidic residues. CNA-B domains lie at 607 to 719 (LYKI…YKEP), 720 to 829 (KYNL…YKTP), and 830 to 940 (KYSL…EEDT). The tract at residues 904 to 1141 (VTNTTEDDKD…TGSENNGSNN (238 aa)) is disordered. Composition is skewed to acidic residues over residues 908–918 (TEDDKDADGGE) and 935–1105 (YFEE…DSDS). The LPXTG sorting signal motif lies at 1129 to 1133 (LPETG). Thr1132 carries the pentaglycyl murein peptidoglycan amidated threonine modification. Positions 1133-1166 (GSENNGSNNATLFGGLFAALGSLLLFGRRKKQNK) are cleaved as a propeptide — removed by sortase.

The protein belongs to the serine-aspartate repeat-containing protein (SDr) family. As to quaternary structure, interacts with host complement factor H/CFAH (via C-terminus). Interacts with host complement regulator C4BPA.

Its subcellular location is the secreted. The protein localises to the cell wall. Its function is as follows. Cell surface-associated calcium-binding protein which plays an important role in adhesion and pathogenesis. Contributes to the resistance to killing by innate immune components in blood and thus attenuates bacterial clearance by interacting with host complement factor H/CFAH and modulating its activity. Also inhibits bacterial opsonization and killing by interacting with host complement regulator C4BPA and thus inhibiting classical complement pathway activation. In Staphylococcus aureus (strain COL), this protein is Serine-aspartate repeat-containing protein E (sdrE).